A 242-amino-acid chain; its full sequence is RNA polymerase sigma factor for flagellar operon (242 aa).

The short motif at 55–68 is the Polymerase core binding element; that stretch reads DMQQIGLIALVEAG. A DNA-binding region (H-T-H motif) is located at residues 211 to 230; the sequence is LHEIALVLDLTPPRICQLHK.

This sequence belongs to the sigma-70 factor family.

Sigma factors are initiation factors that promote the attachment of RNA polymerase to specific initiation sites and are then released. This alternative sigma factor is specific for the flagellin gene (fliC) expression. The chain is RNA polymerase sigma factor for flagellar operon (lafS) from Vibrio parahaemolyticus serotype O3:K6 (strain RIMD 2210633).